Consider the following 385-residue polypeptide: Glucans biosynthesis protein C (385 aa).

A run of 10 helical transmembrane segments spans residues 17–37 (AWLM…SHTW), 60–80 (MQVF…RYPL), 91–111 (VGIP…IMLQ), 137–157 (ISHL…VWIF), 173–193 (KFSM…YAVI), 212–232 (FIVM…LAFI), 239–259 (LFTT…VAYL), 274–294 (TESV…FSFG), 311–331 (ASLF…AYIT), and 338–358 (WLGF…LYEI).

Belongs to the acyltransferase 3 family. OpgC subfamily.

The protein localises to the cell membrane. It participates in glycan metabolism; osmoregulated periplasmic glucan (OPG) biosynthesis. In terms of biological role, necessary for the succinyl substitution of periplasmic glucans. Could catalyze the transfer of succinyl residues from the cytoplasmic side of the membrane to the nascent glucan backbones on the periplasmic side of the membrane. The polypeptide is Glucans biosynthesis protein C (Escherichia coli O139:H28 (strain E24377A / ETEC)).